We begin with the raw amino-acid sequence, 97 residues long: UPF0298 protein MGAS9429_Spy0329 (97 aa).

This sequence belongs to the UPF0298 family.

Its subcellular location is the cytoplasm. This is UPF0298 protein MGAS9429_Spy0329 from Streptococcus pyogenes serotype M12 (strain MGAS9429).